Here is a 294-residue protein sequence, read N- to C-terminus: Maltose/maltodextrin import ATP-binding protein MalK (294 aa).

One can recognise an ABC transporter domain in the interval 4-233; sequence VQLRNVTKAW…PADRFVAGFI (230 aa). 36 to 43 contributes to the ATP binding site; that stretch reads GPSGCGKS.

The protein belongs to the ABC transporter superfamily. Maltooligosaccharide importer (TC 3.A.1.1.1) family. The complex is composed of two ATP-binding proteins (MalK), two transmembrane proteins (MalG and MalK) and a solute-binding protein (MalE).

Its subcellular location is the cell inner membrane. The catalysed reaction is D-maltose(out) + ATP + H2O = D-maltose(in) + ADP + phosphate + H(+). Part of the ABC transporter complex MalEFGK involved in maltose/maltodextrin import. Responsible for energy coupling to the transport system. In Klebsiella aerogenes (Enterobacter aerogenes), this protein is Maltose/maltodextrin import ATP-binding protein MalK.